The sequence spans 245 residues: tRNA (guanine-N(1)-)-methyltransferase (245 aa).

Gly114 provides a ligand contact to S-adenosyl-L-methionine.

This sequence belongs to the RNA methyltransferase TrmD family. As to quaternary structure, homodimer.

The protein resides in the cytoplasm. The enzyme catalyses guanosine(37) in tRNA + S-adenosyl-L-methionine = N(1)-methylguanosine(37) in tRNA + S-adenosyl-L-homocysteine + H(+). In terms of biological role, specifically methylates guanosine-37 in various tRNAs. The polypeptide is tRNA (guanine-N(1)-)-methyltransferase (Sphingopyxis alaskensis (strain DSM 13593 / LMG 18877 / RB2256) (Sphingomonas alaskensis)).